A 209-amino-acid chain; its full sequence is Uracil phosphoribosyltransferase (209 aa).

Residues Arg79, Arg104, and 131 to 139 (DPMLATGGS) contribute to the 5-phospho-alpha-D-ribose 1-diphosphate site. Uracil contacts are provided by residues Ile194 and 199-201 (GDA). 5-phospho-alpha-D-ribose 1-diphosphate is bound at residue Asp200.

This sequence belongs to the UPRTase family. The cofactor is Mg(2+).

It carries out the reaction UMP + diphosphate = 5-phospho-alpha-D-ribose 1-diphosphate + uracil. Its pathway is pyrimidine metabolism; UMP biosynthesis via salvage pathway; UMP from uracil: step 1/1. Allosterically activated by GTP. Functionally, catalyzes the conversion of uracil and 5-phospho-alpha-D-ribose 1-diphosphate (PRPP) to UMP and diphosphate. In Finegoldia magna (strain ATCC 29328 / DSM 20472 / WAL 2508) (Peptostreptococcus magnus), this protein is Uracil phosphoribosyltransferase.